Reading from the N-terminus, the 464-residue chain is MSTDKTNQSWGGRFSEPVDAFVARFTASVDFDKRLYRHDIMGSIAHATMLAQVGVLSDAERDTIIDGLKTIQGEIEAGNFDWRVDLEDVHMNIEARLTDRIGITGKKLHTGRSRNDQVATDIRLWLRDEIDLILAEITRLQQGLLEQAEREAETIMPGFTHLQTAQPVTFGHHLLAWFEMLSRDYERLVDCRKRANRMPLGSAALAGTTYPIDRELTCKLLGFEAVAGNSLDGVSDRDFAIEFCAAASVAMMHLSRFSEELVLWTSAQFQFIDLPDRFCTGSSIMPQKKNPDVPELVRGKTGRVFGALTGLLTLMKGQPLAYNKDNQEDKEPLFDAADTLRDSLRAFADMIPAIKPKHAIMREAALRGFSTATDLADYLVRRGLPFRDCHEIVGHAVKYGVDTGKDLAEMSLDELRQFSDQIEQDVFAVLTLEGSVNARNHIGGTAPAQVRAAVVRGKALLASR.

It belongs to the lyase 1 family. Argininosuccinate lyase subfamily.

It is found in the cytoplasm. It catalyses the reaction 2-(N(omega)-L-arginino)succinate = fumarate + L-arginine. It functions in the pathway amino-acid biosynthesis; L-arginine biosynthesis; L-arginine from L-ornithine and carbamoyl phosphate: step 3/3. The sequence is that of Argininosuccinate lyase from Pseudomonas putida (strain GB-1).